The sequence spans 257 residues: Indole-3-glycerol phosphate synthase (257 aa).

This sequence belongs to the TrpC family.

The enzyme catalyses 1-(2-carboxyphenylamino)-1-deoxy-D-ribulose 5-phosphate + H(+) = (1S,2R)-1-C-(indol-3-yl)glycerol 3-phosphate + CO2 + H2O. The protein operates within amino-acid biosynthesis; L-tryptophan biosynthesis; L-tryptophan from chorismate: step 4/5. This chain is Indole-3-glycerol phosphate synthase, found in Chlorobium chlorochromatii (strain CaD3).